The sequence spans 430 residues: Adenylosuccinate synthetase (430 aa).

Residues 13 to 19 and 41 to 43 each bind GTP; these read GDEGKGK and GHT. Asp-14 (proton acceptor) is an active-site residue. Residues Asp-14 and Gly-41 each coordinate Mg(2+). IMP is bound by residues 14–17, 39–42, Thr-130, Arg-144, Gln-225, Thr-240, and Arg-304; these read DEGK and NAGH. His-42 (proton donor) is an active-site residue. 300–306 contacts substrate; sequence STTGRAR. GTP contacts are provided by residues Arg-306, 332-334, and 414-416; these read KLD and STG.

This sequence belongs to the adenylosuccinate synthetase family. Homodimer. The cofactor is Mg(2+).

It localises to the cytoplasm. The catalysed reaction is IMP + L-aspartate + GTP = N(6)-(1,2-dicarboxyethyl)-AMP + GDP + phosphate + 2 H(+). Its pathway is purine metabolism; AMP biosynthesis via de novo pathway; AMP from IMP: step 1/2. Functionally, plays an important role in the de novo pathway of purine nucleotide biosynthesis. Catalyzes the first committed step in the biosynthesis of AMP from IMP. This is Adenylosuccinate synthetase from Pseudomonas putida (strain ATCC 700007 / DSM 6899 / JCM 31910 / BCRC 17059 / LMG 24140 / F1).